We begin with the raw amino-acid sequence, 122 residues long: MAISKEDILNAISEMTVMEIVDLISAMEEKFGVTAAVAAAPVAADAAPAAEEKTEFDVILTEAGANKVAVIKVVRAVTGLGLKEAKAAVDEAPSTIKEAASKEEAEKIKKDLEEAGAKAELK.

The protein belongs to the bacterial ribosomal protein bL12 family. As to quaternary structure, homodimer. Part of the ribosomal stalk of the 50S ribosomal subunit. Forms a multimeric L10(L12)X complex, where L10 forms an elongated spine to which 2 to 4 L12 dimers bind in a sequential fashion. Binds GTP-bound translation factors.

Its function is as follows. Forms part of the ribosomal stalk which helps the ribosome interact with GTP-bound translation factors. Is thus essential for accurate translation. The protein is Large ribosomal subunit protein bL12 of Dichelobacter nodosus (strain VCS1703A).